A 484-amino-acid chain; its full sequence is Folate synthesis bifunctional protein (484 aa).

The segment at 15-141 (VIALGSNVGN…PFVLAPLVDL (127 aa)) is HPPK. A Pterin-binding domain is found at 202–470 (TYVMGILNLT…NVRDNVDAAR (269 aa)). The DHPS stretch occupies residues 204-484 (VMGILNLTPD…MMTKRFKNVD (281 aa)). Asparagine 209 is a binding site for Mg(2+). (7,8-dihydropterin-6-yl)methyl diphosphate is bound by residues threonine 249, aspartate 286, asparagine 305, aspartate 378, lysine 423, and 458–460 (RVH).

This sequence in the N-terminal section; belongs to the HPPK family. The protein in the C-terminal section; belongs to the DHPS family. Requires Mg(2+) as cofactor. In terms of tissue distribution, expressed exclusively in reproductive tissues.

It is found in the cytoplasm. It localises to the cytosol. The enzyme catalyses 6-hydroxymethyl-7,8-dihydropterin + ATP = (7,8-dihydropterin-6-yl)methyl diphosphate + AMP + H(+). It carries out the reaction (7,8-dihydropterin-6-yl)methyl diphosphate + 4-aminobenzoate = 7,8-dihydropteroate + diphosphate. The protein operates within cofactor biosynthesis; tetrahydrofolate biosynthesis; 2-amino-4-hydroxy-6-hydroxymethyl-7,8-dihydropteridine diphosphate from 7,8-dihydroneopterin triphosphate: step 4/4. Its pathway is cofactor biosynthesis; tetrahydrofolate biosynthesis; 7,8-dihydrofolate from 2-amino-4-hydroxy-6-hydroxymethyl-7,8-dihydropteridine diphosphate and 4-aminobenzoate: step 1/2. Its activity is regulated as follows. Inhibited by sulfanilamide. Functionally, catalyzes the first two consecutive steps of tetrahydrofolate biosynthesis. Plays a role in seed stress response and survival. This is Folate synthesis bifunctional protein from Arabidopsis thaliana (Mouse-ear cress).